A 300-amino-acid polypeptide reads, in one-letter code: MTDLPDTDFTQRFIFDENDARGELVSLERSYAEVLAKHPYPEPVAQLLGELMAAASLLVGTMKFDGLLILQARSEGPVPMLMIECSSEREIRGLARYEADQIAPDATLSDLMANGVLAITVDPTEGQRYQGIVDLDGETLSDCFTNYFVMSQQVGTKFWLNADGKRARGLLLQQLPADRIKDDDERTDSWRKLTALAGTLTAEELLGLDNETILHRLYHEEAVRLFEEQSLRFNCSCSRERSANALVSLGLEDAQNLVVEHGGNIEIDCQFCNERYLFDAADVAQLFAGAGIDSPSDTRH.

Cystine bridges form between cysteine 235–cysteine 237 and cysteine 269–cysteine 272.

It belongs to the HSP33 family. In terms of processing, under oxidizing conditions two disulfide bonds are formed involving the reactive cysteines. Under reducing conditions zinc is bound to the reactive cysteines and the protein is inactive.

The protein localises to the cytoplasm. Its function is as follows. Redox regulated molecular chaperone. Protects both thermally unfolding and oxidatively damaged proteins from irreversible aggregation. Plays an important role in the bacterial defense system toward oxidative stress. This chain is 33 kDa chaperonin, found in Pseudomonas fluorescens (strain SBW25).